The primary structure comprises 551 residues: Nucleobase-ascorbate transporter 3 (551 aa).

The tract at residues 1–30 is disordered; sequence MVETGHHHQHPPAPAAAGHPPVPSMAMARN. Transmembrane regions (helical) follow at residues 56 to 76, 92 to 111, 117 to 136, 158 to 178, 179 to 199, 202 to 222, 242 to 262, 306 to 326, 390 to 410, 412 to 432, 442 to 462, and 481 to 501; these read ETVV…VLIA, RVIQ…QTLI, TVMG…IRDY, SLII…WGNL, IRIF…LGLF, GFPL…LLII, ALLV…VSGA, VFGM…VFFA, FFMI…SIPL, IFAG…ISFI, NMYV…YFLA, and DILN…ATIL.

Belongs to the nucleobase:cation symporter-2 (NCS2) (TC 2.A.40) family. In terms of tissue distribution, expressed in the apical meristem 4 days after imbibition (DAI). Expressed in the major veins of rosette leaves and pedicels. Expressed in the root central cylinder, root meristems, root tips and lateral root primordia.

The protein resides in the membrane. The polypeptide is Nucleobase-ascorbate transporter 3 (NAT3) (Arabidopsis thaliana (Mouse-ear cress)).